Here is a 422-residue protein sequence, read N- to C-terminus: MNANDNVVIVGTGLAGVEVAFGLRASGWEGNIRLVGDATVIPHHLPPLSKAYLAGKATAESLYLRTPDAYAAQNIQLLGGTQVTAINRDRQQVILSDGRALDYDRLVLATGGRPRPLPVASGAVGKANNFRYLRTLEDAECIRRQLIADNRLVVIGGGYIGLEVAATAIKANMHVTLLDTAARVLERVTAPPVSAFYEHLHREAGVDIRTGTQVCGFEMSTDQQKVTAVLCEDGTRLPADLVIAGIGLIPNCELASAAGLQVDNGIVINEHMQTSDPLIMAVGDCARFHSQLYDRWVRIESVPNALEQARKIAAILCGKVPRDEAAPWFWSDQYEIGLKMVGLSEGYDRIIVRGSLAQPDFSVFYLQGDRVLAVDTVNRPVEFNQSKQIITDRLPVEPNLLGDESVPLKEIIAAAKAELSSA.

The FAD site is built by alanine 15, aspartate 37, lysine 50, valine 83, and arginine 134. 156–165 (GGGYIGLEVA) provides a ligand contact to NAD(+). 2 residues coordinate FAD: aspartate 284 and valine 302.

It belongs to the FAD-dependent oxidoreductase family. As to quaternary structure, homodimer or monomer. FAD is required as a cofactor.

The catalysed reaction is 2 reduced [2Fe-2S]-[putidaredoxin] + NAD(+) + H(+) = 2 oxidized [2Fe-2S]-[putidaredoxin] + NADH. Its pathway is terpene metabolism; (R)-camphor degradation. In terms of biological role, the oxidation of camphor by cytochrome P450-CAM CamC requires the participation of the flavoprotein, putidaredoxin reductase CamA, and the iron-sulfur protein, putidaredoxin CamB, to mediate the transfer of electrons from NADH to P450 for oxygen activation. This Pseudomonas putida (Arthrobacter siderocapsulatus) protein is Putidaredoxin reductase CamA.